The sequence spans 460 residues: Probable glucan endo-1,3-beta-glucosidase eglC (460 aa).

The first 18 residues, 1–18 (MQLAQLAAFAMTLATSEA), serve as a signal peptide directing secretion. Glu128 functions as the Proton donor in the catalytic mechanism. Residue Asn183 is glycosylated (N-linked (GlcNAc...) asparagine). Glu239 acts as the Nucleophile in catalysis. Residues Asn312, Asn367, and Asn373 are each glycosylated (N-linked (GlcNAc...) asparagine). Positions 379–437 (RPSGSASARPSAGAISSGSGSSSSGSGSSGSTGTSATSGQSSSSGSSAAAGSSSPAAFS) are disordered. The span at 380–437 (PSGSASARPSAGAISSGSGSSSSGSGSSGSTGTSATSGQSSSSGSSAAAGSSSPAAFS) shows a compositional bias: low complexity. Residue Ser430 is the site of GPI-anchor amidated serine attachment. Residues 431–460 (SSPAAFSGASTLSGSLFGAVVAVFMTLAAL) constitute a propeptide, removed in mature form.

The protein belongs to the glycosyl hydrolase 17 family. In terms of processing, the GPI-anchor is attached to the protein in the endoplasmic reticulum and serves to target the protein to the cell surface. There, the glucosamine-inositol phospholipid moiety is cleaved off and the GPI-modified mannoprotein is covalently attached via its lipidless GPI glycan remnant to the 1,6-beta-glucan of the outer cell wall layer.

The protein resides in the cell membrane. It localises to the secreted. The protein localises to the cell wall. It catalyses the reaction Hydrolysis of (1-&gt;3)-beta-D-glucosidic linkages in (1-&gt;3)-beta-D-glucans.. In terms of biological role, glucanases play a role in cell expansion during growth, in cell-cell fusion during mating, and in spore release during sporulation. This enzyme may be involved in beta-glucan degradation and also function biosynthetically as a transglycosylase. The polypeptide is Probable glucan endo-1,3-beta-glucosidase eglC (eglC) (Aspergillus niger (strain ATCC MYA-4892 / CBS 513.88 / FGSC A1513)).